We begin with the raw amino-acid sequence, 63 residues long: Adipokinetic prohormone type 1 (63 aa).

Residues Met-1–Ala-22 form the signal peptide. At Gln-23 the chain carries Pyrrolidone carboxylic acid. A Threonine amide modification is found at Thr-32.

It belongs to the AKH/HRTH/RPCH family. Adipokinetic hormone precursor-related peptide (APRP) can form three type of disulfide-bond dimers: p1 (alpha-alpha), p2 (alpha-beta), and p3 (beta-beta).

It is found in the secreted. Its function is as follows. This hormone, released from cells in the corpora cardiaca, causes release of diglycerides from the fat body and stimulation of muscles to use these diglycerides as an energy source during energy-demanding processes. This chain is Adipokinetic prohormone type 1, found in Schistocerca nitens (Vagrant locust).